We begin with the raw amino-acid sequence, 492 residues long: 1-aminocyclopropane-1-carboxylate synthase 1 (492 aa).

The residue at position 277 (Lys-277) is an N6-(pyridoxal phosphate)lysine.

This sequence belongs to the class-I pyridoxal-phosphate-dependent aminotransferase family. Homodimer. The cofactor is pyridoxal 5'-phosphate.

The enzyme catalyses S-adenosyl-L-methionine = 1-aminocyclopropane-1-carboxylate + S-methyl-5'-thioadenosine + H(+). Its pathway is alkene biosynthesis; ethylene biosynthesis via S-adenosyl-L-methionine; ethylene from S-adenosyl-L-methionine: step 1/2. Catalyzes the formation of 1-aminocyclopropane-1-carboxylate, a direct precursor of ethylene in higher plants. This Prunus mume (Japanese apricot) protein is 1-aminocyclopropane-1-carboxylate synthase 1 (ACS1).